A 261-amino-acid polypeptide reads, in one-letter code: U1 small nuclear ribonucleoprotein 70 kDa homolog (261 aa).

An RRM domain is found at 100–178 (KTMFLSRLSY…RRIVVDVERG (79 aa)). Residues 192–261 (GLGGRHYTKE…DSSPKRRRYN (70 aa)) are disordered. Over residues 198 to 215 (YTKERPRRERGSRFRGDS) the composition is skewed to basic and acidic residues. Positions 216–235 (GFRGGYRGGFRKSSGGGSRF) are enriched in gly residues.

As to quaternary structure, component of the spliceosome, where it is associated with snRNP U1. Associates with U1 snRNA.

It is found in the nucleus. Involved in nuclear mRNA splicing. Essential for growth. This Schizosaccharomyces pombe (strain 972 / ATCC 24843) (Fission yeast) protein is U1 small nuclear ribonucleoprotein 70 kDa homolog.